The primary structure comprises 344 residues: Arginine N-succinyltransferase (344 aa).

Leucine 125 is a binding site for succinyl-CoA. The Proton donor role is filled by histidine 229.

Belongs to the arginine N-succinyltransferase family.

It carries out the reaction succinyl-CoA + L-arginine = N(2)-succinyl-L-arginine + CoA + H(+). The protein operates within amino-acid degradation; L-arginine degradation via AST pathway; L-glutamate and succinate from L-arginine: step 1/5. Its function is as follows. Catalyzes the transfer of succinyl-CoA to arginine to produce N(2)-succinylarginine. The protein is Arginine N-succinyltransferase of Escherichia coli (strain UTI89 / UPEC).